A 305-amino-acid chain; its full sequence is Methionyl-tRNA formyltransferase (305 aa).

108-111 provides a ligand contact to (6S)-5,6,7,8-tetrahydrofolate; that stretch reads SLLP.

This sequence belongs to the Fmt family.

It catalyses the reaction L-methionyl-tRNA(fMet) + (6R)-10-formyltetrahydrofolate = N-formyl-L-methionyl-tRNA(fMet) + (6S)-5,6,7,8-tetrahydrofolate + H(+). Its function is as follows. Attaches a formyl group to the free amino group of methionyl-tRNA(fMet). The formyl group appears to play a dual role in the initiator identity of N-formylmethionyl-tRNA by promoting its recognition by IF2 and preventing the misappropriation of this tRNA by the elongation apparatus. This chain is Methionyl-tRNA formyltransferase, found in Clavibacter michiganensis subsp. michiganensis (strain NCPPB 382).